The sequence spans 392 residues: Meiotically up-regulated gene 11 protein (392 aa).

The protein localises to the cytoplasm. The protein resides in the nucleus. In terms of biological role, has a role in meiosis. The polypeptide is Meiotically up-regulated gene 11 protein (mug11) (Schizosaccharomyces pombe (strain 972 / ATCC 24843) (Fission yeast)).